The primary structure comprises 352 residues: Photosystem II D2 protein (352 aa).

Residues Cys40–Thr60 traverse the membrane as a helical segment. His117 provides a ligand contact to chlorophyll a. The chain crosses the membrane as a helical span at residues Gly124–Pro140. Residues Gln129 and Asn142 each coordinate pheophytin a. Residues Val152–Ser165 traverse the membrane as a helical segment. His197 lines the chlorophyll a pocket. The chain crosses the membrane as a helical span at residues Gly207–Glu227. A plastoquinone is bound by residues His214 and Phe261. Position 214 (His214) interacts with Fe cation. His268 is a binding site for Fe cation. The helical transmembrane segment at Gly278–Arg294 threads the bilayer.

This sequence belongs to the reaction center PufL/M/PsbA/D family. As to quaternary structure, PSII is composed of 1 copy each of membrane proteins PsbA, PsbB, PsbC, PsbD, PsbE, PsbF, PsbH, PsbI, PsbJ, PsbK, PsbL, PsbM, PsbT, PsbX, PsbY, PsbZ, Psb30/Ycf12, peripheral proteins PsbO, CyanoQ (PsbQ), PsbU, PsbV and a large number of cofactors. It forms dimeric complexes. The cofactor is The D1/D2 heterodimer binds P680, chlorophylls that are the primary electron donor of PSII, and subsequent electron acceptors. It shares a non-heme iron and each subunit binds pheophytin, quinone, additional chlorophylls, carotenoids and lipids. There is also a Cl(-1) ion associated with D1 and D2, which is required for oxygen evolution. The PSII complex binds additional chlorophylls, carotenoids and specific lipids..

The protein localises to the cellular thylakoid membrane. The enzyme catalyses 2 a plastoquinone + 4 hnu + 2 H2O = 2 a plastoquinol + O2. In terms of biological role, photosystem II (PSII) is a light-driven water:plastoquinone oxidoreductase that uses light energy to abstract electrons from H(2)O, generating O(2) and a proton gradient subsequently used for ATP formation. It consists of a core antenna complex that captures photons, and an electron transfer chain that converts photonic excitation into a charge separation. The D1/D2 (PsbA/PsbD) reaction center heterodimer binds P680, the primary electron donor of PSII as well as several subsequent electron acceptors. D2 is needed for assembly of a stable PSII complex. This Synechococcus sp. (strain JA-3-3Ab) (Cyanobacteria bacterium Yellowstone A-Prime) protein is Photosystem II D2 protein.